The primary structure comprises 27 residues: MQLFHLCLVISCSCPTVQASKLCLGWL.

This chain is Truncated HBeAg protein (C), found in Chimpanzee hepatitis B virus (isolate United Kingdom/LSH/1988) (HBVcpz).